Here is a 284-residue protein sequence, read N- to C-terminus: 2-dehydro-3-deoxyphosphooctonate aldolase (284 aa).

Belongs to the KdsA family.

Its subcellular location is the cytoplasm. It carries out the reaction D-arabinose 5-phosphate + phosphoenolpyruvate + H2O = 3-deoxy-alpha-D-manno-2-octulosonate-8-phosphate + phosphate. The protein operates within carbohydrate biosynthesis; 3-deoxy-D-manno-octulosonate biosynthesis; 3-deoxy-D-manno-octulosonate from D-ribulose 5-phosphate: step 2/3. It functions in the pathway bacterial outer membrane biogenesis; lipopolysaccharide biosynthesis. In Haemophilus influenzae (strain 86-028NP), this protein is 2-dehydro-3-deoxyphosphooctonate aldolase.